A 314-amino-acid chain; its full sequence is Ribosomal RNA small subunit methyltransferase H (314 aa).

Residues 33-35 (GGH), Asp-52, Phe-84, Asp-105, and Gln-112 contribute to the S-adenosyl-L-methionine site.

The protein belongs to the methyltransferase superfamily. RsmH family.

It is found in the cytoplasm. The enzyme catalyses cytidine(1402) in 16S rRNA + S-adenosyl-L-methionine = N(4)-methylcytidine(1402) in 16S rRNA + S-adenosyl-L-homocysteine + H(+). Specifically methylates the N4 position of cytidine in position 1402 (C1402) of 16S rRNA. This chain is Ribosomal RNA small subunit methyltransferase H, found in Lactobacillus delbrueckii subsp. bulgaricus (strain ATCC 11842 / DSM 20081 / BCRC 10696 / JCM 1002 / NBRC 13953 / NCIMB 11778 / NCTC 12712 / WDCM 00102 / Lb 14).